The sequence spans 285 residues: Retron Ec67 DNA adenine methylase (285 aa).

S-adenosyl-L-methionine contacts are provided by Trp7, Lys11, Asp51, and Asp179.

Belongs to the N(4)/N(6)-methyltransferase family.

The enzyme catalyses a 2'-deoxyadenosine in DNA + S-adenosyl-L-methionine = an N(6)-methyl-2'-deoxyadenosine in DNA + S-adenosyl-L-homocysteine + H(+). Functionally, an alpha subtype methylase that recognizes the double-stranded sequence 5'-GATC-3' and methylates A-2 on both strands. May play a regulatory role in the functions of the retron. This Escherichia coli protein is Retron Ec67 DNA adenine methylase.